The following is a 177-amino-acid chain: Putative fimbrin-like protein FimI (177 aa).

An N-terminal signal peptide occupies residues 1–19 (MIRKGAALVGLVLMSPVIA). The cysteines at positions 40 and 81 are disulfide-linked.

Belongs to the fimbrial protein family.

The protein resides in the fimbrium. The polypeptide is Putative fimbrin-like protein FimI (fimI) (Salmonella typhi).